Reading from the N-terminus, the 363-residue chain is MNPRTVQPLDVPPLYCPIPPEIHPDLALIEKRSIDWFQGFGVFPGEAGRALLRGWQFPALAARAYPEEDAERVRIVADFVHWTTFDDVLIDTDHSHVDDVLPGAPPDLLAVATKMVRMLEVPDAALLPGDPWIRSLMDLRRRLGTIAAPEQMARWTGAFREYLLAATWKRFCRQARRLPSLADYVTMRTADGGVQMYVALSEVVGGYRLTDRDLATPAVRAVTEMALTLIAWDNDLFSHYKESLTAGPCINLIDVIAGERGCSLEDAVPVAVAMRDRVMCRYMAVRERTERDLGVAARRYVRSLDRWIAANIDMSATSTRYTNPLNRPATEMPRARFTPARTDLPSDDSPLALPFPDIAWWWD.

5 residues coordinate Mg(2+): aspartate 93, aspartate 98, asparagine 234, serine 238, and glutamate 242.

Belongs to the terpene synthase family. It depends on Mg(2+) as a cofactor.

The catalysed reaction is (2E,6E,10E)-geranylgeranyl diphosphate = bonnadiene + diphosphate. The protein operates within secondary metabolite biosynthesis; terpenoid biosynthesis. Diterpene synthase that catalyzes the conversion of geranylgeranyl diphosphate (GGPP) to bonnadiene. Cannot use geranyl diphosphate (GPP), farnesyl diphosphate (FPP) and geranylfarnesyl diphosphate (GFPP). In Allokutzneria albata (Kibdelosporangium albatum), this protein is Bonnadiene synthase.